The sequence spans 101 residues: Small ribosomal subunit protein uS14 (101 aa).

The span at 1–11 (MAKKSSVEKNN) shows a compositional bias: basic and acidic residues. Residues 1-22 (MAKKSSVEKNNRRQRMVKNAAA) form a disordered region. Residues 12–22 (RRQRMVKNAAA) are compositionally biased toward basic residues.

The protein belongs to the universal ribosomal protein uS14 family. In terms of assembly, part of the 30S ribosomal subunit. Contacts proteins S3 and S10.

Functionally, binds 16S rRNA, required for the assembly of 30S particles and may also be responsible for determining the conformation of the 16S rRNA at the A site. This chain is Small ribosomal subunit protein uS14, found in Afipia carboxidovorans (strain ATCC 49405 / DSM 1227 / KCTC 32145 / OM5) (Oligotropha carboxidovorans).